A 209-amino-acid polypeptide reads, in one-letter code: MNNNGMQMPQARYVLPSFIEQSAYGTKETNPYAKLFEERIIFLGTQVDDTSANDIMAQLLVLEGLDPDRDITMYINSPGGSFTSLMAIYDTMQYVRPDVRTVCLGQAASAAAVLLAAGAPGKRACLPNSRVLIHQPATQGTQGQVSDLEIQAKEIERMRTLMEQTLARHTGRSAEQVRIDTDRDKILTAEEAVEYGIVDQVFDYRKLNG.

The active-site Nucleophile is the serine 109. Histidine 134 is an active-site residue.

Belongs to the peptidase S14 family. As to quaternary structure, fourteen ClpP subunits assemble into 2 heptameric rings which stack back to back to give a disk-like structure with a central cavity, resembling the structure of eukaryotic proteasomes.

The protein localises to the cytoplasm. The enzyme catalyses Hydrolysis of proteins to small peptides in the presence of ATP and magnesium. alpha-casein is the usual test substrate. In the absence of ATP, only oligopeptides shorter than five residues are hydrolyzed (such as succinyl-Leu-Tyr-|-NHMec, and Leu-Tyr-Leu-|-Tyr-Trp, in which cleavage of the -Tyr-|-Leu- and -Tyr-|-Trp bonds also occurs).. Functionally, cleaves peptides in various proteins in a process that requires ATP hydrolysis. Has a chymotrypsin-like activity. Plays a major role in the degradation of misfolded proteins. In Corynebacterium diphtheriae (strain ATCC 700971 / NCTC 13129 / Biotype gravis), this protein is ATP-dependent Clp protease proteolytic subunit 1.